Consider the following 242-residue polypeptide: tRNA pseudouridine synthase A (242 aa).

The active-site Nucleophile is the Asp51. Tyr107 is a binding site for substrate.

It belongs to the tRNA pseudouridine synthase TruA family. Homodimer.

It catalyses the reaction uridine(38/39/40) in tRNA = pseudouridine(38/39/40) in tRNA. Functionally, formation of pseudouridine at positions 38, 39 and 40 in the anticodon stem and loop of transfer RNAs. This Helicobacter pylori (strain J99 / ATCC 700824) (Campylobacter pylori J99) protein is tRNA pseudouridine synthase A.